Reading from the N-terminus, the 933-residue chain is Phosphoenolpyruvate carboxylase (933 aa).

Catalysis depends on residues histidine 164 and lysine 595.

This sequence belongs to the PEPCase type 1 family. The cofactor is Mg(2+).

The catalysed reaction is oxaloacetate + phosphate = phosphoenolpyruvate + hydrogencarbonate. Forms oxaloacetate, a four-carbon dicarboxylic acid source for the tricarboxylic acid cycle. The polypeptide is Phosphoenolpyruvate carboxylase (Rhodopseudomonas palustris (strain HaA2)).